A 341-amino-acid polypeptide reads, in one-letter code: Anthranilate phosphoribosyltransferase (341 aa).

5-phospho-alpha-D-ribose 1-diphosphate-binding positions include Gly-79, 82–83 (GD), Thr-87, 89–92 (NIST), 107–115 (KHGGRSVSS), and Ser-119. Gly-79 is an anthranilate binding site. Mg(2+) is bound at residue Ser-91. Arg-165 lines the anthranilate pocket. 2 residues coordinate Mg(2+): Asp-224 and Glu-225.

Belongs to the anthranilate phosphoribosyltransferase family. Homodimer. It depends on Mg(2+) as a cofactor.

The enzyme catalyses N-(5-phospho-beta-D-ribosyl)anthranilate + diphosphate = 5-phospho-alpha-D-ribose 1-diphosphate + anthranilate. The protein operates within amino-acid biosynthesis; L-tryptophan biosynthesis; L-tryptophan from chorismate: step 2/5. Functionally, catalyzes the transfer of the phosphoribosyl group of 5-phosphorylribose-1-pyrophosphate (PRPP) to anthranilate to yield N-(5'-phosphoribosyl)-anthranilate (PRA). The sequence is that of Anthranilate phosphoribosyltransferase from Ruminiclostridium cellulolyticum (strain ATCC 35319 / DSM 5812 / JCM 6584 / H10) (Clostridium cellulolyticum).